The following is a 500-amino-acid chain: Serine/threonine-protein phosphatase 2A 56 kDa regulatory subunit beta isoform (500 aa).

Residues 1–19 (METKLPPASTPTSPSSPGL) are compositionally biased toward low complexity. Disordered stretches follow at residues 1–55 (METK…YQSN) and 474–500 (GTQG…GGQS). Residues serine 32, serine 35, serine 44, serine 46, serine 47, and serine 48 each carry the phosphoserine; by CLK2 modification. Positions 34–45 (RSLRRARPRRSH) are enriched in basic residues.

The protein belongs to the phosphatase 2A regulatory subunit B56 family. Component of the serine/threonine-protein phosphatase 2A complex (PP2A). This complex consists of a common heterodimeric core enzyme, composed of a 36 kDa catalytic subunit (subunit C) and a 65 kDa constant scaffold subunit (PR65 or subunit A), that associates with a variety of regulatory subunits. Proteins that associate with the core dimer include three families of regulatory subunits B (the R2/B/PR55/B55, R3/B''/PR72/PR130/PR59 and R5/B'/B56 families), the 48 kDa variable regulatory subunit, viral proteins, and cell signaling molecules. Interacts with SGO1. Interacts with AKT1. Highly expressed in brain.

It localises to the nucleus. As the regulatory component of the serine/threonine-protein phosphatase 2A (PP2A) holoenzyme, modulates substrate specificity, subcellular localization, and responsiveness to phosphorylation. The phosphorylated form mediates the interaction between PP2A and AKT1, leading to AKT1 dephosphorylation. The polypeptide is Serine/threonine-protein phosphatase 2A 56 kDa regulatory subunit beta isoform (PPP2R5B) (Oryctolagus cuniculus (Rabbit)).